The sequence spans 160 residues: Fluoride-specific ion channel FluC (160 aa).

4 helical membrane-spanning segments follow: residues 5-25 (LFISYGAILGASLRWAIGLLF), 34-54 (FGTLIANLFGCLIIGVLLGLF), 67-87 (FLITGFLGSLTTFSSFSSEVV), and 99-119 (FCVLMMHLFGCLAMTVLGIWI). Residues glycine 74 and threonine 77 each contribute to the Na(+) site.

This sequence belongs to the fluoride channel Fluc/FEX (TC 1.A.43) family.

It localises to the cell inner membrane. The enzyme catalyses fluoride(in) = fluoride(out). Na(+) is not transported, but it plays an essential structural role and its presence is essential for fluoride channel function. Its function is as follows. Fluoride-specific ion channel. Important for reducing fluoride concentration in the cell, thus reducing its toxicity. The sequence is that of Fluoride-specific ion channel FluC from Haemophilus influenzae (strain ATCC 51907 / DSM 11121 / KW20 / Rd).